The chain runs to 198 residues: Ribonuclease HII (198 aa).

One can recognise an RNase H type-2 domain in the interval 10–198 (QLVAGVDEVG…PVKRALGLAS (189 aa)). Asp-16, Glu-17, and Asp-108 together coordinate a divalent metal cation.

It belongs to the RNase HII family. It depends on Mn(2+) as a cofactor. Mg(2+) serves as cofactor.

It is found in the cytoplasm. It catalyses the reaction Endonucleolytic cleavage to 5'-phosphomonoester.. Its function is as follows. Endonuclease that specifically degrades the RNA of RNA-DNA hybrids. This chain is Ribonuclease HII, found in Escherichia coli O81 (strain ED1a).